Reading from the N-terminus, the 354-residue chain is Probable protein phosphatase 2C 69 (354 aa).

Residues 33 to 279 (SYGYASSAGK…DNITCVVVRF (247 aa)) enclose the PPM-type phosphatase domain. Mn(2+) contacts are provided by Asp69, Gly70, Asp231, and Asp270. Positions 289–354 (HISSSSSKEA…LERNSVTDKV (66 aa)) are disordered. Composition is skewed to polar residues over residues 309–328 (ISSN…PENV) and 336–348 (ASRS…LERN).

It belongs to the PP2C family. Mg(2+) is required as a cofactor. Requires Mn(2+) as cofactor.

The enzyme catalyses O-phospho-L-seryl-[protein] + H2O = L-seryl-[protein] + phosphate. It catalyses the reaction O-phospho-L-threonyl-[protein] + H2O = L-threonyl-[protein] + phosphate. This is Probable protein phosphatase 2C 69 from Arabidopsis thaliana (Mouse-ear cress).